We begin with the raw amino-acid sequence, 544 residues long: CTP synthase (544 aa).

The tract at residues 1–266 (MTRFVFITGG…DREVLRHFNL (266 aa)) is amidoligase domain. A CTP-binding site is contributed by Ser13. Residue Ser13 coordinates UTP. 14–19 (SLGKGI) contacts ATP. Tyr54 is an L-glutamine binding site. Position 71 (Asp71) interacts with ATP. Mg(2+) contacts are provided by Asp71 and Glu140. CTP contacts are provided by residues 147–149 (DIE), 187–192 (KTKPTQ), and Lys223. UTP contacts are provided by residues 187 to 192 (KTKPTQ) and Lys223. Residues 292–543 (KIAIVGKYIT…VAAAVRQARL (252 aa)) enclose the Glutamine amidotransferase type-1 domain. An L-glutamine-binding site is contributed by Gly354. Catalysis depends on Cys381, which acts as the Nucleophile; for glutamine hydrolysis. L-glutamine-binding positions include 382–385 (FGMQ), Glu405, and Arg471. Catalysis depends on residues His516 and Glu518.

The protein belongs to the CTP synthase family. Homotetramer.

The catalysed reaction is UTP + L-glutamine + ATP + H2O = CTP + L-glutamate + ADP + phosphate + 2 H(+). It catalyses the reaction L-glutamine + H2O = L-glutamate + NH4(+). The enzyme catalyses UTP + NH4(+) + ATP = CTP + ADP + phosphate + 2 H(+). It functions in the pathway pyrimidine metabolism; CTP biosynthesis via de novo pathway; CTP from UDP: step 2/2. Allosterically activated by GTP, when glutamine is the substrate; GTP has no effect on the reaction when ammonia is the substrate. The allosteric effector GTP functions by stabilizing the protein conformation that binds the tetrahedral intermediate(s) formed during glutamine hydrolysis. Inhibited by the product CTP, via allosteric rather than competitive inhibition. Catalyzes the ATP-dependent amination of UTP to CTP with either L-glutamine or ammonia as the source of nitrogen. Regulates intracellular CTP levels through interactions with the four ribonucleotide triphosphates. This Granulibacter bethesdensis (strain ATCC BAA-1260 / CGDNIH1) protein is CTP synthase.